Here is a 464-residue protein sequence, read N- to C-terminus: MWPTLRYVGGVCGLARYCVAGGFLRASGPASGVPGLLCGGGRRSSSTSSFDIVIVGGGIVGLASARTLILKHPGLSIGVVEKEKDLALHQTGHNSGVIHSGIYYKPESLKAKLCVEGAALIYEYCNLKGIPYRQCGKLIVAVEQEEIPRLQALYERGLQNGVEGLRLIQQEDIKKKEPYCRGLMAIDCPYTGIVNYQQVALSFAQDFQEAGGSILRDFEVKGIEIAKENSSRSKDGMNYPIAVKNSKGKEIRCRYVVTCAGLYSDRISELSGCNPDPQIVPFRGDYLVLKPEKGYLVKGNIYPVPDSRFPFLGVHFTPRLDGTIWLGPNAVLAFKREGYRPFDFDARDVMEVILKSGFINLVFQHFSYGVNEMYKACFLSETVKHLQKFIPEITISDVLRGPAGVRAQALDRDGNLVEDFVFDGGTGEIADRVLHVRNAPSPAATSSLAISRMIAEEAQQRFKL.

The transit peptide at 1 to 52 (MWPTLRYVGGVCGLARYCVAGGFLRASGPASGVPGLLCGGGRRSSSTSSFDI) directs the protein to the mitochondrion. An N6-acetyllysine mark is found at Lys105 and Lys174.

It belongs to the L2HGDH family. FAD is required as a cofactor.

The protein localises to the mitochondrion. It catalyses the reaction (S)-2-hydroxyglutarate + A = 2-oxoglutarate + AH2. This Mus musculus (Mouse) protein is L-2-hydroxyglutarate dehydrogenase, mitochondrial (L2hgdh).